The following is a 385-amino-acid chain: Cell division protein FtsZ (385 aa).

GTP contacts are provided by residues 37–41 (GGGSN), 125–127 (GTG), Glu-156, Lys-160, and Asp-204.

This sequence belongs to the FtsZ family. Homodimer. Polymerizes to form a dynamic ring structure in a strictly GTP-dependent manner. Interacts directly with several other division proteins.

It is found in the cytoplasm. Its function is as follows. Essential cell division protein that forms a contractile ring structure (Z ring) at the future cell division site. The regulation of the ring assembly controls the timing and the location of cell division. One of the functions of the FtsZ ring is to recruit other cell division proteins to the septum to produce a new cell wall between the dividing cells. Binds GTP and shows GTPase activity. The polypeptide is Cell division protein FtsZ (Helicobacter pylori (strain J99 / ATCC 700824) (Campylobacter pylori J99)).